The following is a 278-amino-acid chain: Octanoyltransferase LipM (278 aa).

The 216-residue stretch at 33–248 (KKMPPTIRFY…GFEKGLDVEL (216 aa)) folds into the BPL/LPL catalytic domain. C150 serves as the catalytic Acyl-thioester intermediate.

The protein belongs to the octanoyltransferase LipM family. In terms of assembly, monomer.

It catalyses the reaction octanoyl-[ACP] + L-lysyl-[protein] = N(6)-octanoyl-L-lysyl-[protein] + holo-[ACP] + H(+). It participates in protein modification; protein lipoylation via endogenous pathway; protein N(6)-(lipoyl)lysine from octanoyl-[acyl-carrier-protein]. Functionally, catalyzes the transfer of endogenously produced octanoic acid from octanoyl-acyl-carrier-protein onto the lipoyl domain of GcvH, an intermediate carrier during protein lipoylation. This is Octanoyltransferase LipM from Bacillus cereus (strain ATCC 14579 / DSM 31 / CCUG 7414 / JCM 2152 / NBRC 15305 / NCIMB 9373 / NCTC 2599 / NRRL B-3711).